The following is a 379-amino-acid chain: UDP-4-amino-4-deoxy-L-arabinose--oxoglutarate aminotransferase (379 aa).

Lys182 is subject to N6-(pyridoxal phosphate)lysine.

The protein belongs to the DegT/DnrJ/EryC1 family. ArnB subfamily. As to quaternary structure, homodimer. It depends on pyridoxal 5'-phosphate as a cofactor.

The catalysed reaction is UDP-4-amino-4-deoxy-beta-L-arabinose + 2-oxoglutarate = UDP-beta-L-threo-pentopyranos-4-ulose + L-glutamate. It participates in nucleotide-sugar biosynthesis; UDP-4-deoxy-4-formamido-beta-L-arabinose biosynthesis; UDP-4-deoxy-4-formamido-beta-L-arabinose from UDP-alpha-D-glucuronate: step 2/3. It functions in the pathway bacterial outer membrane biogenesis; lipopolysaccharide biosynthesis. Its function is as follows. Catalyzes the conversion of UDP-4-keto-arabinose (UDP-Ara4O) to UDP-4-amino-4-deoxy-L-arabinose (UDP-L-Ara4N). The modified arabinose is attached to lipid A and is required for resistance to polymyxin and cationic antimicrobial peptides. In Erwinia tasmaniensis (strain DSM 17950 / CFBP 7177 / CIP 109463 / NCPPB 4357 / Et1/99), this protein is UDP-4-amino-4-deoxy-L-arabinose--oxoglutarate aminotransferase.